Consider the following 260-residue polypeptide: Hydroxyethylthiazole kinase 1 (260 aa).

Methionine 39 provides a ligand contact to substrate. ATP-binding residues include arginine 115 and threonine 160. Glycine 187 contributes to the substrate binding site.

The protein belongs to the Thz kinase family. Requires Mg(2+) as cofactor.

It carries out the reaction 5-(2-hydroxyethyl)-4-methylthiazole + ATP = 4-methyl-5-(2-phosphooxyethyl)-thiazole + ADP + H(+). Its pathway is cofactor biosynthesis; thiamine diphosphate biosynthesis; 4-methyl-5-(2-phosphoethyl)-thiazole from 5-(2-hydroxyethyl)-4-methylthiazole: step 1/1. Catalyzes the phosphorylation of the hydroxyl group of 4-methyl-5-beta-hydroxyethylthiazole (THZ). This is Hydroxyethylthiazole kinase 1 from Streptococcus pneumoniae serotype 19F (strain G54).